The chain runs to 225 residues: C-reactive protein (225 aa).

The N-terminal stretch at 1 to 20 is a signal peptide; the sequence is MEKLLWCFLTLVSFSNMSDQ. In terms of domain architecture, Pentraxin (PTX) spans 24–225; sequence HKKAFVFPKE…EVHVKPQLWP (202 aa). An intrachain disulfide couples Cys-55 to Cys-116. Ca(2+)-binding residues include Asn-80, Gln-158, Asp-159, and Gln-169.

This sequence belongs to the pentraxin family. Homopentamer. Pentraxin (or pentaxin) have a discoid arrangement of 5 non-covalently bound subunits. Interacts with FCN1; may regulate monocyte activation by FCN1. Requires Ca(2+) as cofactor. As to expression, found in plasma.

It localises to the secreted. In terms of biological role, displays several functions associated with host defense: it promotes agglutination, bacterial capsular swelling, phagocytosis and complement fixation through its calcium-dependent binding to phosphorylcholine. Can interact with DNA and histones and may scavenge nuclear material released from damaged circulating cells. In Oryctolagus cuniculus (Rabbit), this protein is C-reactive protein (CRP).